The chain runs to 525 residues: 2-isopropylmalate synthase (525 aa).

The 263-residue stretch at 12-274 folds into the Pyruvate carboxyltransferase domain; that stretch reads VVIFDTTLRD…WNKIDTTQLT (263 aa). Positions 21, 209, 211, and 245 each coordinate Mn(2+). Positions 398-525 are regulatory domain; it reads KLLSLSVIAG…GHGASAAAAS (128 aa).

This sequence belongs to the alpha-IPM synthase/homocitrate synthase family. LeuA type 1 subfamily. In terms of assembly, homodimer. Mn(2+) is required as a cofactor.

The protein localises to the cytoplasm. The catalysed reaction is 3-methyl-2-oxobutanoate + acetyl-CoA + H2O = (2S)-2-isopropylmalate + CoA + H(+). The protein operates within amino-acid biosynthesis; L-leucine biosynthesis; L-leucine from 3-methyl-2-oxobutanoate: step 1/4. Its function is as follows. Catalyzes the condensation of the acetyl group of acetyl-CoA with 3-methyl-2-oxobutanoate (2-ketoisovalerate) to form 3-carboxy-3-hydroxy-4-methylpentanoate (2-isopropylmalate). The protein is 2-isopropylmalate synthase of Bradyrhizobium sp. (strain ORS 278).